Reading from the N-terminus, the 77-residue chain is Chassatide C2 (77 aa).

Positions 1-24 (MAKFANYLMLFLLVASLVMLEAQS) are cleaved as a signal peptide. Positions 25 to 44 (SDTIKVPDLGKRLLMNRDPN) are cleaved as a propeptide — removed in mature form. A cross-link (cyclopeptide (Gly-Asn)) is located at residues 45 to 75 (GIPCAESCVWIPCTITALMGCSCKNNVCYNN). 3 cysteine pairs are disulfide-bonded: C48–C65, C52–C67, and C57–C72. Position 63 is a methionine sulfoxide; in form chassatide chaC2A (M63). Positions 76-77 (EL) are cleaved as a propeptide — removed in mature form.

Belongs to the cyclotide family. Bracelet subfamily. In terms of processing, this is a cyclic peptide. In terms of tissue distribution, expressed in fruit, pedicel and stem but not in leaf and root (at protein level).

Functionally, chassatide C2: Probably participates in a plant defense mechanism. Has no activity against bacteria up to a concentration of 80 uM. Has cytotoxic but no hemolytic activity. Chassatide C2A: Probably participates in a plant defense mechanism. Has no activity against bacteria up to a concentration of 80 uM. Has no cytotoxic and no hemolytic activity. This is Chassatide C2 from Chassalia chartacea (Chassalia curviflora).